We begin with the raw amino-acid sequence, 630 residues long: Elongation factor 4 (630 aa).

Positions 1–22 (MTVARNRAGAGPGKGSPISSFA) are disordered. The tr-type G domain maps to 30 to 211 (ARIRNFCIIA…EVVRQVPAPV (182 aa)). GTP is bound by residues 42–47 (DHGKST) and 158–161 (NKID).

Belongs to the TRAFAC class translation factor GTPase superfamily. Classic translation factor GTPase family. LepA subfamily.

Its subcellular location is the cell membrane. The enzyme catalyses GTP + H2O = GDP + phosphate + H(+). In terms of biological role, required for accurate and efficient protein synthesis under certain stress conditions. May act as a fidelity factor of the translation reaction, by catalyzing a one-codon backward translocation of tRNAs on improperly translocated ribosomes. Back-translocation proceeds from a post-translocation (POST) complex to a pre-translocation (PRE) complex, thus giving elongation factor G a second chance to translocate the tRNAs correctly. Binds to ribosomes in a GTP-dependent manner. This chain is Elongation factor 4, found in Rhodococcus jostii (strain RHA1).